A 126-amino-acid chain; its full sequence is Protein ApaG (126 aa).

The ApaG domain maps to 2–126 (SDPRYQIDVS…FRLAVPGALH (125 aa)).

This is Protein ApaG from Azotobacter vinelandii (strain DJ / ATCC BAA-1303).